We begin with the raw amino-acid sequence, 199 residues long: MSFTGTQQKCKACEKTVYAVELLSADGVGYHKSCFKCTHCKSRLQLSSYSSMEGVLYCKPHFEQLFKESGSFNKNFQSPAKSADKSTPELTRTPSRVAGRFSGTQEKCATCSKTVYPIEKVTVESQTYHKSCFKCSHGGCPISPSNYAALEGILYCKHHFAQLFKEKGSYNHLIKSASIKRSAAAAVAAGVPAASVPES.

LIM zinc-binding domains are found at residues 8 to 68 and 106 to 166; these read QKCK…LFKE and EKCA…LFKE.

In terms of assembly, interacts with F-actin. In terms of tissue distribution, expressed in roots, leaves, stems, flowers and siliques. Barely detected in pollen.

It localises to the cytoplasm. The protein localises to the cytoskeleton. Its function is as follows. Binds to actin filaments and promotes cross-linking into thick bundles. Has an actin-stabilizing activity. The actin regulatory activities are not regulated by pH and [Ca(2+)]. The protein is LIM domain-containing protein WLIM2b of Arabidopsis thaliana (Mouse-ear cress).